A 156-amino-acid chain; its full sequence is Flagellar assembly factor FliW (156 aa).

The protein belongs to the FliW family. Interacts with translational regulator CsrA and flagellin(s).

Its subcellular location is the cytoplasm. Functionally, acts as an anti-CsrA protein, binds CsrA and prevents it from repressing translation of its target genes, one of which is flagellin. Binds to flagellin and participates in the assembly of the flagellum. This Pseudothermotoga lettingae (strain ATCC BAA-301 / DSM 14385 / NBRC 107922 / TMO) (Thermotoga lettingae) protein is Flagellar assembly factor FliW.